The sequence spans 187 residues: uncharacterized protein (187 aa).

Positions 42-63 (RTNGPGKDSFSFSTSGSKPSSS) are disordered. Low complexity predominate over residues 50-63 (SFSFSTSGSKPSSS).

This is an uncharacterized protein from Saccharomyces cerevisiae (strain ATCC 204508 / S288c) (Baker's yeast).